The chain runs to 346 residues: N-acetyl-gamma-glutamyl-phosphate reductase (346 aa).

Cys150 is an active-site residue.

Belongs to the NAGSA dehydrogenase family. Type 1 subfamily.

The protein localises to the cytoplasm. The catalysed reaction is N-acetyl-L-glutamate 5-semialdehyde + phosphate + NADP(+) = N-acetyl-L-glutamyl 5-phosphate + NADPH + H(+). It functions in the pathway amino-acid biosynthesis; L-arginine biosynthesis; N(2)-acetyl-L-ornithine from L-glutamate: step 3/4. In terms of biological role, catalyzes the NADPH-dependent reduction of N-acetyl-5-glutamyl phosphate to yield N-acetyl-L-glutamate 5-semialdehyde. The protein is N-acetyl-gamma-glutamyl-phosphate reductase of Desulforudis audaxviator (strain MP104C).